The primary structure comprises 345 residues: uncharacterized protein (345 aa).

Residue Met-1 is a domain, TBDR plug. Positions 1 to 345 (MDLGPIYNTR…EVILNTKIEF (345 aa)) constitute a TBDR beta-barrel domain. The TonB C-terminal box signature appears at 328–345 (PVALGYAREVILNTKIEF).

This sequence belongs to the TonB-dependent receptor family.

The protein localises to the cell outer membrane. This is an uncharacterized protein from Haemophilus influenzae (strain ATCC 51907 / DSM 11121 / KW20 / Rd).